Reading from the N-terminus, the 427-residue chain is Enolase (427 aa).

Position 163 (glutamine 163) interacts with (2R)-2-phosphoglycerate. Glutamate 205 functions as the Proton donor in the catalytic mechanism. Mg(2+)-binding residues include aspartate 242, glutamate 285, and aspartate 312. (2R)-2-phosphoglycerate contacts are provided by lysine 337, arginine 366, serine 367, and lysine 388. Lysine 337 (proton acceptor) is an active-site residue.

It belongs to the enolase family. Mg(2+) is required as a cofactor.

It localises to the cytoplasm. The protein localises to the secreted. The protein resides in the cell surface. It catalyses the reaction (2R)-2-phosphoglycerate = phosphoenolpyruvate + H2O. It participates in carbohydrate degradation; glycolysis; pyruvate from D-glyceraldehyde 3-phosphate: step 4/5. In terms of biological role, catalyzes the reversible conversion of 2-phosphoglycerate (2-PG) into phosphoenolpyruvate (PEP). It is essential for the degradation of carbohydrates via glycolysis. In Rhodopseudomonas palustris (strain BisB5), this protein is Enolase.